A 339-amino-acid chain; its full sequence is Methylthioribose-1-phosphate isomerase (339 aa).

Substrate-binding positions include R52–A54, R89, and Q188. D229 acts as the Proton donor in catalysis. N239 to K240 provides a ligand contact to substrate.

Belongs to the eIF-2B alpha/beta/delta subunits family. MtnA subfamily.

The enzyme catalyses 5-(methylsulfanyl)-alpha-D-ribose 1-phosphate = 5-(methylsulfanyl)-D-ribulose 1-phosphate. It functions in the pathway amino-acid biosynthesis; L-methionine biosynthesis via salvage pathway; L-methionine from S-methyl-5-thio-alpha-D-ribose 1-phosphate: step 1/6. Its function is as follows. Catalyzes the interconversion of methylthioribose-1-phosphate (MTR-1-P) into methylthioribulose-1-phosphate (MTRu-1-P). This is Methylthioribose-1-phosphate isomerase from Anaeromyxobacter dehalogenans (strain 2CP-C).